Reading from the N-terminus, the 268-residue chain is 4-hydroxy-tetrahydrodipicolinate reductase (268 aa).

Residues 10-15 (GSTGRM), Glu36, 99-101 (GTT), and 123-126 (APNM) contribute to the NAD(+) site. His156 (proton donor/acceptor) is an active-site residue. Residue His157 coordinates (S)-2,3,4,5-tetrahydrodipicolinate. Lys160 acts as the Proton donor in catalysis. 166-167 (GT) is a (S)-2,3,4,5-tetrahydrodipicolinate binding site.

This sequence belongs to the DapB family.

The protein localises to the cytoplasm. The enzyme catalyses (S)-2,3,4,5-tetrahydrodipicolinate + NAD(+) + H2O = (2S,4S)-4-hydroxy-2,3,4,5-tetrahydrodipicolinate + NADH + H(+). It catalyses the reaction (S)-2,3,4,5-tetrahydrodipicolinate + NADP(+) + H2O = (2S,4S)-4-hydroxy-2,3,4,5-tetrahydrodipicolinate + NADPH + H(+). The protein operates within amino-acid biosynthesis; L-lysine biosynthesis via DAP pathway; (S)-tetrahydrodipicolinate from L-aspartate: step 4/4. Catalyzes the conversion of 4-hydroxy-tetrahydrodipicolinate (HTPA) to tetrahydrodipicolinate. The polypeptide is 4-hydroxy-tetrahydrodipicolinate reductase (Nitrosomonas europaea (strain ATCC 19718 / CIP 103999 / KCTC 2705 / NBRC 14298)).